Consider the following 620-residue polypeptide: Transcription factor kayak (620 aa).

Disordered stretches follow at residues 1-36 and 184-288; these read MKVK…SNGV and SDTD…EKRR. The segment covering 184–194 has biased composition (polar residues); the sequence is SDTDDSNASWN. Composition is skewed to low complexity over residues 201–233 and 249–266; these read GDTT…GANN and ANNN…PAAR. The 64-residue stretch at 284–347 folds into the bZIP domain; the sequence is EEKRRIRRER…NQLKYVIEAH (64 aa). Positions 286-305 are basic motif; sequence KRRIRRERNKAAAARCRKRR. Positions 312-340 are leucine-zipper; it reads LTEEVDALVKKGDTLKAEITTLTELRNQL. A disordered region spans residues 375–414; the sequence is STGGSSCGSVHSNHSHNNNNNNNNSNDSSSGTITGFDATL. Positions 377–405 are enriched in low complexity; that stretch reads GGSSCGSVHSNHSHNNNNNNNNSNDSSSG. S422 is subject to Phosphoserine. Disordered regions lie at residues 447 to 466 and 590 to 620; these read GLDS…AKRA and SGPL…LCPL.

It belongs to the bZIP family. Fos subfamily. In terms of assembly, homodimer. Heterodimer with Jra. The kay-Jra heterodimer binds more stably to the AP-1 site than either of the two proteins alone.

It is found in the nucleus. In terms of biological role, developmentally regulated transcription factor AP-1 binds and recognizes the enhancer DNA sequence: 5'-TGA[CG]TCA-3'. May play a role in the function or determination of a particular subset of cells in the developing embryo. It is able to carry out its function either independently of or in conjunction with Jra. The polypeptide is Transcription factor kayak (Drosophila willistoni (Fruit fly)).